A 251-amino-acid chain; its full sequence is Hydroxyacylglutathione hydrolase (251 aa).

7 residues coordinate Zn(2+): H53, H55, D57, H58, H110, D127, and H165.

This sequence belongs to the metallo-beta-lactamase superfamily. Glyoxalase II family. In terms of assembly, monomer. The cofactor is Zn(2+).

It catalyses the reaction an S-(2-hydroxyacyl)glutathione + H2O = a 2-hydroxy carboxylate + glutathione + H(+). The protein operates within secondary metabolite metabolism; methylglyoxal degradation; (R)-lactate from methylglyoxal: step 2/2. Functionally, thiolesterase that catalyzes the hydrolysis of S-D-lactoyl-glutathione to form glutathione and D-lactic acid. This Escherichia coli O6:H1 (strain CFT073 / ATCC 700928 / UPEC) protein is Hydroxyacylglutathione hydrolase.